Here is a 35-residue protein sequence, read N- to C-terminus: Cecropin-A (35 aa).

Leu-35 bears the Leucine amide mark.

Monomer. As to expression, hemolymph.

The protein resides in the secreted. Functionally, cecropins have lytic and antibacterial activity against several Gram-positive and Gram-negative bacteria. Also has activity against fungi. The sequence is that of Cecropin-A from Heliothis virescens (Tobacco budworm moth).